A 306-amino-acid chain; its full sequence is tRNA dimethylallyltransferase (306 aa).

9–16 serves as a coordination point for ATP; that stretch reads GPTAIGKT. 11 to 16 is a substrate binding site; sequence TAIGKT. Residues 34 to 37 form an interaction with substrate tRNA region; it reads DSMQ.

It belongs to the IPP transferase family. As to quaternary structure, monomer. Mg(2+) serves as cofactor.

The catalysed reaction is adenosine(37) in tRNA + dimethylallyl diphosphate = N(6)-dimethylallyladenosine(37) in tRNA + diphosphate. Its function is as follows. Catalyzes the transfer of a dimethylallyl group onto the adenine at position 37 in tRNAs that read codons beginning with uridine, leading to the formation of N6-(dimethylallyl)adenosine (i(6)A). The polypeptide is tRNA dimethylallyltransferase (Lactobacillus helveticus (strain DPC 4571)).